Here is a 357-residue protein sequence, read N- to C-terminus: Glucose 1-dehydrogenase (357 aa).

Residue aspartate 38 participates in Zn(2+) binding. Substrate-binding residues include threonine 40 and histidine 49. Residues histidine 63 and glutamate 64 each coordinate Zn(2+). Substrate is bound by residues glutamate 114 and glutamate 150. Residue glutamate 150 participates in Zn(2+) binding. Residues 181-184 (NGSL), 207-208 (RR), serine 228, 272-274 (LGV), and 301-303 (SVN) each bind NADP(+). Asparagine 303 serves as a coordination point for substrate.

The protein belongs to the zinc-containing alcohol dehydrogenase family. Glucose 1-dehydrogenase subfamily. In terms of assembly, homodimer. Zn(2+) is required as a cofactor.

It carries out the reaction D-glucose + NAD(+) = D-glucono-1,5-lactone + NADH + H(+). The enzyme catalyses D-glucose + NADP(+) = D-glucono-1,5-lactone + NADPH + H(+). Its activity is regulated as follows. Activated by molar concentrations of KCl or NaCl. Inhibited by EDTA in vitro. Catalyzes the NAD(P)(+)-dependent oxidation of D-glucose to D-gluconate. Displays broad substrate specificity since it is able to catalyze the oxidation of a number of alternative aldose sugars, such as D-xylose, D-galactose, and D-fucose, to the corresponding glyconate. Can utilize both NAD(+) and NADP(+) as electron acceptor, with a preference for NADP(+). Physiologically, seems to be involved in the degradation of glucose through a modified Entner-Doudoroff pathway. The sequence is that of Glucose 1-dehydrogenase from Haloferax mediterranei (strain ATCC 33500 / DSM 1411 / JCM 8866 / NBRC 14739 / NCIMB 2177 / R-4) (Halobacterium mediterranei).